The chain runs to 386 residues: 2-isopropylmalate synthase (386 aa).

One can recognise a Pyruvate carboxyltransferase domain in the interval Ile15 to Tyr269. Residues Asp24, His207, His209, and Asn243 each coordinate a divalent metal cation.

This sequence belongs to the alpha-IPM synthase/homocitrate synthase family. As to quaternary structure, homodimer. A divalent metal cation is required as a cofactor.

It carries out the reaction 3-methyl-2-oxobutanoate + acetyl-CoA + H2O = (2S)-2-isopropylmalate + CoA + H(+). Its pathway is amino-acid biosynthesis; L-leucine biosynthesis; L-leucine from 3-methyl-2-oxobutanoate: step 1/4. Catalyzes the condensation of the acetyl group of acetyl-CoA with 3-methyl-2-oxobutanoate (2-oxoisovalerate) to form 3-carboxy-3-hydroxy-4-methylpentanoate (2-isopropylmalate). Carries out the first step of the leucine biosynthesis pathway. This Saccharolobus solfataricus (strain ATCC 35092 / DSM 1617 / JCM 11322 / P2) (Sulfolobus solfataricus) protein is 2-isopropylmalate synthase (leuA).